Reading from the N-terminus, the 341-residue chain is Ectoine-binding periplasmic protein TeaA (341 aa).

A signal peptide spans 1–25 (MKAYKLLTTASIGALMLGMSTAAYS). The L-ectoine site is built by E34, R169, N209, W213, and F234.

Belongs to the bacterial solute-binding protein 7 family. As to quaternary structure, monomer. The complex comprises the extracytoplasmic solute receptor protein TeaA, and the two transmembrane proteins TeaB and TeaC.

The protein localises to the periplasm. Part of the tripartite ATP-independent periplasmic (TRAP) transport system TeaABC involved in the uptake of ectoine and hydroxyectoine in response to osmotic upshock. Probably functions as a recovery system for synthesized ectoine that leaks out of the cell. Binds ectoine with high affinity. Affinity for hydroxyectoine is approximately 20-fold lower. This chain is Ectoine-binding periplasmic protein TeaA (teaA), found in Halomonas elongata (strain ATCC 33173 / DSM 2581 / NBRC 15536 / NCIMB 2198 / 1H9).